We begin with the raw amino-acid sequence, 656 residues long: Chaperone protein DnaK (656 aa).

Position 204 is a phosphothreonine; by autocatalysis (T204). The segment at 602 to 656 (KLAERVYAKKGGAAGAPPGGEAEGEPQAQAGGKKEDVVDAEFEEVKDEKKKDEDK) is disordered. Over residues 620-632 (GGEAEGEPQAQAG) the composition is skewed to low complexity. A compositionally biased stretch (basic and acidic residues) spans 647–656 (KDEKKKDEDK).

It belongs to the heat shock protein 70 family.

Its function is as follows. Acts as a chaperone. The sequence is that of Chaperone protein DnaK from Coxiella burnetii (strain CbuG_Q212) (Coxiella burnetii (strain Q212)).